A 394-amino-acid polypeptide reads, in one-letter code: Phosphoglycerate kinase (394 aa).

Residues 21–23, Arg-36, 59–62, Arg-118, and Arg-151 contribute to the substrate site; these read DFN and HLGR. Ser-183 carries the post-translational modification Phosphoserine. 2 residues coordinate ATP: Lys-201 and Gly-292. Phosphothreonine is present on Thr-299. ATP is bound by residues Glu-323 and 350–353; that span reads GGDS.

The protein belongs to the phosphoglycerate kinase family. Monomer.

The protein localises to the cytoplasm. It carries out the reaction (2R)-3-phosphoglycerate + ATP = (2R)-3-phospho-glyceroyl phosphate + ADP. It functions in the pathway carbohydrate degradation; glycolysis; pyruvate from D-glyceraldehyde 3-phosphate: step 2/5. This is Phosphoglycerate kinase from Bacillus cereus (strain B4264).